Consider the following 533-residue polypeptide: Di/tripeptide-binding protein 3 (533 aa).

An N-terminal signal peptide occupies residues 1–24 (MRKILPLRAWLAAGLILGSPFSHA).

It belongs to the bacterial solute-binding protein 5 family. The complex is composed of two ATP-binding proteins (DppD and DppF), two transmembrane proteins (DppB and DppC) and a solute-binding protein (DppA3). Five orthologous SBPs (DppA1-A5) are present in P.aeruginosa, which increases the substrate specificity of the DppBCDF transporter.

Functionally, part of the ABC transporter DppABCDF involved in the uptake of various di/tripeptides. Prefers dipeptides with acidic residues at the C-terminal end. Involved in the uptake of phaseolotoxin, a toxic tripeptide inhibiting the enzyme ornithine carbamoyltransferase. The protein is Di/tripeptide-binding protein 3 of Pseudomonas aeruginosa (strain UCBPP-PA14).